A 74-amino-acid polypeptide reads, in one-letter code: MTHPKPDDRSDNVEKIQNTIDHTLENLNESKDYINAHAEELSSKEKDELSSKNERRKESVDGLRSEIKDEADSQ.

The disordered stretch occupies residues 38 to 74 (AEELSSKEKDELSSKNERRKESVDGLRSEIKDEADSQ).

Belongs to the Tlp family.

It localises to the spore core. This chain is Small, acid-soluble spore protein Tlp, found in Oceanobacillus iheyensis (strain DSM 14371 / CIP 107618 / JCM 11309 / KCTC 3954 / HTE831).